The chain runs to 288 residues: MACSHLAAAAAAASPAAARSPAASSAATASAFARLSATPRVASGGLAVRGQRGVAAVVAAAAGAAAATPVADIEERRATEKQPIIVIDNYDSFTYNLCQYMGELGLNFEVYRNDELTIEDVKRKNPRGILISPGPGEPQDSGISLQTVLELGPTIPIFGVCMGLQCIGEAFGGKIIRAPSGVMHGKSSPVRYDEELGKALFNGLPNPFTAARYHSLVIEQETFPHDALEATAWTEDGLIMAARHKKYRHIQGVQFHPESIITPEGKRIILNFVRFIEELEKQRAGEKN.

Residues 1–58 constitute a chloroplast transit peptide; sequence MACSHLAAAAAAASPAAARSPAASSAATASAFARLSATPRVASGGLAVRGQRGVAAVV. The Glutamine amidotransferase type-1 domain maps to 83 to 282; it reads PIIVIDNYDS…VRFIEELEKQ (200 aa). 134–136 contacts L-glutamine; it reads GPG. Cys161 serves as the catalytic Nucleophile. Residues Gln165 and 215–216 contribute to the L-glutamine site; that span reads SL. Catalysis depends on residues His256 and Glu258.

As to quaternary structure, heterotetramer consisting of two non-identical subunits: a beta subunit and a large alpha subunit. Expressed in roots and leaves.

Its subcellular location is the plastid. It is found in the chloroplast. The enzyme catalyses chorismate + L-glutamine = anthranilate + pyruvate + L-glutamate + H(+). It participates in amino-acid biosynthesis; L-tryptophan biosynthesis; L-tryptophan from chorismate: step 1/5. Its function is as follows. Part of a heterotetrameric complex that catalyzes the two-step biosynthesis of anthranilate, an intermediate in the biosynthesis of L-tryptophan. In the first step, the glutamine-binding beta subunit of anthranilate synthase (AS) provides the glutamine amidotransferase activity which generates ammonia as a substrate that, along with chorismate, is used in the second step, catalyzed by the large alpha subunit of AS to produce anthranilate. The chain is Anthranilate synthase beta subunit 1, chloroplastic from Oryza sativa subsp. japonica (Rice).